A 313-amino-acid polypeptide reads, in one-letter code: tRNA pseudouridine synthase B (313 aa).

Residue H44 coordinates substrate. D49 serves as the catalytic Nucleophile. Substrate-binding residues include Y77, Y180, and L201.

Belongs to the pseudouridine synthase TruB family. Type 1 subfamily.

The catalysed reaction is uridine(55) in tRNA = pseudouridine(55) in tRNA. Functionally, responsible for synthesis of pseudouridine from uracil-55 in the psi GC loop of transfer RNAs. The chain is tRNA pseudouridine synthase B from Hamiltonella defensa subsp. Acyrthosiphon pisum (strain 5AT).